The following is a 311-amino-acid chain: Acetyl-coenzyme A carboxylase carboxyl transferase subunit alpha (311 aa).

Residues 36-286 enclose the CoA carboxyltransferase C-terminal domain; that stretch reads NLSKEISKVY…ANYFISELAE (251 aa).

The protein belongs to the AccA family. Acetyl-CoA carboxylase is a heterohexamer composed of biotin carboxyl carrier protein (AccB), biotin carboxylase (AccC) and two subunits each of ACCase subunit alpha (AccA) and ACCase subunit beta (AccD).

The protein localises to the cytoplasm. The enzyme catalyses N(6)-carboxybiotinyl-L-lysyl-[protein] + acetyl-CoA = N(6)-biotinyl-L-lysyl-[protein] + malonyl-CoA. The protein operates within lipid metabolism; malonyl-CoA biosynthesis; malonyl-CoA from acetyl-CoA: step 1/1. Its function is as follows. Component of the acetyl coenzyme A carboxylase (ACC) complex. First, biotin carboxylase catalyzes the carboxylation of biotin on its carrier protein (BCCP) and then the CO(2) group is transferred by the carboxyltransferase to acetyl-CoA to form malonyl-CoA. This is Acetyl-coenzyme A carboxylase carboxyl transferase subunit alpha from Campylobacter concisus (strain 13826).